A 199-amino-acid polypeptide reads, in one-letter code: Adenylyl-sulfate kinase (199 aa).

34 to 41 (GLSGSGKS) contributes to the ATP binding site. The active-site Phosphoserine intermediate is S108.

It belongs to the APS kinase family.

It carries out the reaction adenosine 5'-phosphosulfate + ATP = 3'-phosphoadenylyl sulfate + ADP + H(+). Its pathway is sulfur metabolism; hydrogen sulfide biosynthesis; sulfite from sulfate: step 2/3. Catalyzes the synthesis of activated sulfate. The protein is Adenylyl-sulfate kinase of Oceanobacillus iheyensis (strain DSM 14371 / CIP 107618 / JCM 11309 / KCTC 3954 / HTE831).